Consider the following 375-residue polypeptide: 23S rRNA (uracil(747)-C(5))-methyltransferase RlmC (375 aa).

[4Fe-4S] cluster is bound by residues Cys-3, Cys-11, Cys-14, and Cys-87. The S-adenosyl-L-methionine site is built by Gln-212, Phe-241, Glu-262, and Asn-307. Cys-334 (nucleophile) is an active-site residue.

Belongs to the class I-like SAM-binding methyltransferase superfamily. RNA M5U methyltransferase family. RlmC subfamily.

The catalysed reaction is uridine(747) in 23S rRNA + S-adenosyl-L-methionine = 5-methyluridine(747) in 23S rRNA + S-adenosyl-L-homocysteine + H(+). In terms of biological role, catalyzes the formation of 5-methyl-uridine at position 747 (m5U747) in 23S rRNA. The sequence is that of 23S rRNA (uracil(747)-C(5))-methyltransferase RlmC from Shigella dysenteriae serotype 1 (strain Sd197).